The chain runs to 1075 residues: Error-prone DNA polymerase (1075 aa).

This sequence belongs to the DNA polymerase type-C family. DnaE2 subfamily.

The protein resides in the cytoplasm. The enzyme catalyses DNA(n) + a 2'-deoxyribonucleoside 5'-triphosphate = DNA(n+1) + diphosphate. In terms of biological role, DNA polymerase involved in damage-induced mutagenesis and translesion synthesis (TLS). It is not the major replicative DNA polymerase. This Ralstonia nicotianae (strain ATCC BAA-1114 / GMI1000) (Ralstonia solanacearum) protein is Error-prone DNA polymerase.